The primary structure comprises 483 residues: Proton-coupled amino acid transporter 2 (483 aa).

Topologically, residues 1–58 (MSVTKSTEGPQGAVAIKLDLMSPPESAKKLENKDSTFLDESPSESAGLKKTKGITVFQ) are cytoplasmic. Residues 26 to 36 (SAKKLENKDST) are compositionally biased toward basic and acidic residues. The interval 26 to 46 (SAKKLENKDSTFLDESPSESA) is disordered. Residues 59-79 (ALIHLVKGNMGTGILGLPLAV) form a helical membrane-spanning segment. Residues 80 to 81 (KN) lie on the Extracellular side of the membrane. A helical membrane pass occupies residues 82-102 (AGILMGPLSLLVMGFIACHCM). Over 103–148 (HILVKCAQRFCKRLNKPFMDYGDTVMHGLEANPNAWLQNHAHWGRH) the chain is Cytoplasmic. A helical transmembrane segment spans residues 149-169 (IVSFFLIITQLGFCCVYIVFL). The Extracellular portion of the chain corresponds to 170 to 197 (ADNLKQVVEAVNSTTNNCYSNETVILTP). The chain crosses the membrane as a helical span at residues 198–218 (TMDSRLYMLSFLPFLVLLVLI). The Cytoplasmic segment spans residues 219–222 (RNLR). The chain crosses the membrane as a helical span at residues 223–243 (ILTIFSMLANISMLVSLVIII). Residues 244–264 (QYITQEIPDPSRLPLVASWKT) lie on the Extracellular side of the membrane. The helical transmembrane segment at 265 to 285 (YPLFFGTAIFSFESIGVVLPL) threads the bilayer. At 286-296 (ENKMKNARHFP) the chain is on the cytoplasmic side. The chain crosses the membrane as a helical span at residues 297–317 (AILSLGMSIVTSLYIGMAALG). Over 318–349 (YLRFGDDIKASISLNLPNCWLYQSVKLLYIAG) the chain is Extracellular. A helical membrane pass occupies residues 350-370 (ILCTYALQFYVPAEIIIPFAI). Over 371–379 (SRVSTRWAL) the chain is Cytoplasmic. The chain crosses the membrane as a helical span at residues 380–400 (PLDLSIRLVMVCLTCLLAILI). The Extracellular portion of the chain corresponds to 401-404 (PRLD). Residues 405–425 (LVISLVGSVSGTALALIIPPL) traverse the membrane as a helical segment. Topologically, residues 426–437 (LEVTTFYSEGMS) are cytoplasmic. A helical transmembrane segment spans residues 438–458 (PLTIFKDALISILGFVGFVVG). Residues 459 to 483 (TYQALDELLKSEDSHPFSNSTTFVR) are Extracellular-facing.

This sequence belongs to the amino acid/polyamine transporter 2 family. As to expression, abundantly expressed in kidney and muscle. Expressed in the S1 segment of the proximal tubule close to the glomerulus.

The protein localises to the cell membrane. Its subcellular location is the endoplasmic reticulum membrane. The protein resides in the recycling endosome membrane. The catalysed reaction is glycine(in) + H(+)(in) = glycine(out) + H(+)(out). It carries out the reaction L-alanine(in) + H(+)(in) = L-alanine(out) + H(+)(out). The enzyme catalyses D-alanine(in) + H(+)(in) = D-alanine(out) + H(+)(out). It catalyses the reaction L-proline(out) + H(+)(out) = L-proline(in) + H(+)(in). The catalysed reaction is D-proline(out) + H(+)(out) = D-proline(in) + H(+)(in). It carries out the reaction 4-hydroxy-L-proline(in) + H(+)(in) = 4-hydroxy-L-proline(out) + H(+)(out). The enzyme catalyses L-serine(in) + H(+)(in) = L-serine(out) + H(+)(out). It catalyses the reaction D-serine(out) + H(+)(out) = D-serine(in) + H(+)(in). The catalysed reaction is beta-alanine(in) + H(+)(in) = beta-alanine(out) + H(+)(out). It carries out the reaction 4-aminobutanoate(in) + H(+)(in) = 4-aminobutanoate(out) + H(+)(out). The enzyme catalyses sarcosine(in) + H(+)(in) = sarcosine(out) + H(+)(out). It catalyses the reaction N,N-dimethylglycine(in) + H(+)(in) = N,N-dimethylglycine(out) + H(+)(out). Electrogenic proton/amino acid symporter with a high selectivity for the small side chains amino acids glycine, alanine and proline, where both L- and D-enantiomers are transported. Extension of the backbone length, as in beta-alanine and 4-aminobutanoate or methylation of the amino group, as in sarcosine and N,N-dimethylglycine, are also tolerated but decrease transport efficiency. A free carboxyl group is preferred. The protein is Proton-coupled amino acid transporter 2 of Homo sapiens (Human).